The sequence spans 337 residues: MTHQVSVLHQDKKFDVSLRPKGLKEFCGQAQLTERLELFLNAAIQRGEVPGHCLFFGPPGLGKTSLAHIVANTVGKGLLVASGPQLVKPSDLLGLLTSLQEGDVFFIDEIHRMGKVAEEYLYSAMEDYKIDITIDSGPGARSVSVDLAPFSLVGATTRSGMLSEPLRARFSFTGRVAYYSDEDLATILRRSSNLLGIDADASALYEIARRSRGTPRLANNLLRWVRDFAQMREGNCINSDVAEKALAMLLIDEWGLNEIDIKLLTTIMNYYQGGPVGIKTLSVAVGEDVRTLEDVYEPFLILKGLLKKTSRGRMVTQLAYNHLKRCSDNLQSLGEEK.

The large ATPase domain (RuvB-L) stretch occupies residues 1 to 179; sequence MTHQVSVLHQ…FSFTGRVAYY (179 aa). Residues leucine 18, arginine 19, glycine 60, lysine 63, threonine 64, serine 65, 126–128, arginine 169, tyrosine 179, and arginine 216 contribute to the ATP site; that span reads EDY. Threonine 64 contacts Mg(2+). Residues 180–250 are small ATPAse domain (RuvB-S); that stretch reads SDEDLATILR…VAEKALAMLL (71 aa). Residues 253–337 form a head domain (RuvB-H) region; sequence EWGLNEIDIK…DNLQSLGEEK (85 aa). DNA is bound by residues lysine 308 and arginine 313.

The protein belongs to the RuvB family. As to quaternary structure, homohexamer. Forms an RuvA(8)-RuvB(12)-Holliday junction (HJ) complex. HJ DNA is sandwiched between 2 RuvA tetramers; dsDNA enters through RuvA and exits via RuvB. An RuvB hexamer assembles on each DNA strand where it exits the tetramer. Each RuvB hexamer is contacted by two RuvA subunits (via domain III) on 2 adjacent RuvB subunits; this complex drives branch migration. In the full resolvosome a probable DNA-RuvA(4)-RuvB(12)-RuvC(2) complex forms which resolves the HJ.

Its subcellular location is the cytoplasm. It catalyses the reaction ATP + H2O = ADP + phosphate + H(+). In terms of biological role, the RuvA-RuvB-RuvC complex processes Holliday junction (HJ) DNA during genetic recombination and DNA repair, while the RuvA-RuvB complex plays an important role in the rescue of blocked DNA replication forks via replication fork reversal (RFR). RuvA specifically binds to HJ cruciform DNA, conferring on it an open structure. The RuvB hexamer acts as an ATP-dependent pump, pulling dsDNA into and through the RuvAB complex. RuvB forms 2 homohexamers on either side of HJ DNA bound by 1 or 2 RuvA tetramers; 4 subunits per hexamer contact DNA at a time. Coordinated motions by a converter formed by DNA-disengaged RuvB subunits stimulates ATP hydrolysis and nucleotide exchange. Immobilization of the converter enables RuvB to convert the ATP-contained energy into a lever motion, pulling 2 nucleotides of DNA out of the RuvA tetramer per ATP hydrolyzed, thus driving DNA branch migration. The RuvB motors rotate together with the DNA substrate, which together with the progressing nucleotide cycle form the mechanistic basis for DNA recombination by continuous HJ branch migration. Branch migration allows RuvC to scan DNA until it finds its consensus sequence, where it cleaves and resolves cruciform DNA. The sequence is that of Holliday junction branch migration complex subunit RuvB from Chlamydia abortus (strain DSM 27085 / S26/3) (Chlamydophila abortus).